A 210-amino-acid polypeptide reads, in one-letter code: Protein MSO1 (210 aa).

At M1 the chain carries N-acetylmethionine. M2 is subject to N-acetylserine. Residues 88–210 (KHDMKKQNSR…LKRRNNDYGF (123 aa)) are disordered. A Phosphoserine modification is found at S102. Residues 117–141 (TPSSNGNTPEYTPASKSFQDIYNNH) show a composition bias toward polar residues. 2 stretches are compositionally biased toward low complexity: residues 142 to 161 (TSSS…RPSA) and 172 to 183 (SKTSNSFNTSST).

Interacts physically with SEC1.

Functionally, involved in secretion. Component of the secretory vesicle docking complex. In Saccharomyces cerevisiae (strain ATCC 204508 / S288c) (Baker's yeast), this protein is Protein MSO1 (MSO1).